A 185-amino-acid polypeptide reads, in one-letter code: Hypoxanthine/guanine phosphoribosyltransferase (185 aa).

It belongs to the purine/pyrimidine phosphoribosyltransferase family. Archaeal HPRT subfamily. In terms of assembly, homodimer.

The protein localises to the cytoplasm. It catalyses the reaction IMP + diphosphate = hypoxanthine + 5-phospho-alpha-D-ribose 1-diphosphate. It carries out the reaction GMP + diphosphate = guanine + 5-phospho-alpha-D-ribose 1-diphosphate. Its pathway is purine metabolism; IMP biosynthesis via salvage pathway; IMP from hypoxanthine: step 1/1. Functionally, catalyzes a salvage reaction resulting in the formation of IMP that is energically less costly than de novo synthesis. This is Hypoxanthine/guanine phosphoribosyltransferase from Methanococcus vannielii (strain ATCC 35089 / DSM 1224 / JCM 13029 / OCM 148 / SB).